The primary structure comprises 153 residues: Nucleoside diphosphate kinase (153 aa).

The ATP site is built by lysine 11, phenylalanine 59, arginine 87, threonine 93, arginine 104, and asparagine 114. Histidine 117 acts as the Pros-phosphohistidine intermediate in catalysis.

The protein belongs to the NDK family. In terms of assembly, homotrimer. Requires Mg(2+) as cofactor.

It catalyses the reaction a 2'-deoxyribonucleoside 5'-diphosphate + ATP = a 2'-deoxyribonucleoside 5'-triphosphate + ADP. It carries out the reaction a ribonucleoside 5'-diphosphate + ATP = a ribonucleoside 5'-triphosphate + ADP. Major role in the synthesis of nucleoside triphosphates other than ATP. The ATP gamma phosphate is transferred to the NDP beta phosphate via a ping-pong mechanism, using a phosphorylated active-site intermediate. In Aspergillus fumigatus (strain ATCC MYA-4609 / CBS 101355 / FGSC A1100 / Af293) (Neosartorya fumigata), this protein is Nucleoside diphosphate kinase (ndk1).